A 275-amino-acid chain; its full sequence is Large ribosomal subunit protein uL2 (275 aa).

The interval 224–275 is disordered; that stretch reads VMNPVDHPHGGGEGKSPIGRPSPVTPWGKPTLGYKTRKKNKASDKFIIKRRK. Over residues 264–275 the composition is skewed to basic and acidic residues; that stretch reads KASDKFIIKRRK.

The protein belongs to the universal ribosomal protein uL2 family. In terms of assembly, part of the 50S ribosomal subunit. Forms a bridge to the 30S subunit in the 70S ribosome.

Its function is as follows. One of the primary rRNA binding proteins. Required for association of the 30S and 50S subunits to form the 70S ribosome, for tRNA binding and peptide bond formation. It has been suggested to have peptidyltransferase activity; this is somewhat controversial. Makes several contacts with the 16S rRNA in the 70S ribosome. The protein is Large ribosomal subunit protein uL2 of Acetivibrio thermocellus (strain ATCC 27405 / DSM 1237 / JCM 9322 / NBRC 103400 / NCIMB 10682 / NRRL B-4536 / VPI 7372) (Clostridium thermocellum).